A 471-amino-acid polypeptide reads, in one-letter code: 5-hydroxytryptamine receptor 2A (471 aa).

The Extracellular portion of the chain corresponds to 1–80 (MDILCEENTS…LQEKNWSALL (80 aa)). Asn8, Asn38, Asn44, Asn51, and Asn54 each carry an N-linked (GlcNAc...) asparagine glycan. A helical membrane pass occupies residues 81 to 97 (TAVVIILTIAGNILVIM). Residues 98-111 (AVSLEKKLQNATNY) lie on the Cytoplasmic side of the membrane. Residues 112–137 (FLMSLAIADMLLGFLVMPVSMLTILY) traverse the membrane as a helical segment. Topologically, residues 138-146 (GYRWPLPSK) are extracellular. Residues 147–171 (LCAVWIYLDVLFSTASIMHLCAISL) form a helical membrane-spanning segment. The cysteines at positions 148 and 227 are disulfide-linked. Serotonin is bound at residue Asp155. A DRY motif; important for ligand-induced conformation changes motif is present at residues 172–174 (DRY). The Cytoplasmic portion of the chain corresponds to 172–191 (DRYVAIQNPIHHSRFNSRTK). The helical transmembrane segment at 192 to 215 (AFLKIIAVWTISVGISMPIPVFGL) threads the bilayer. The Extracellular portion of the chain corresponds to 216–232 (QDDSKVFKEGSCLLADD). Residues 233–258 (NFVLIGSFVSFFIPLTIMVITYFLTI) traverse the membrane as a helical segment. The Cytoplasmic segment spans residues 259–322 (KSLQKEATLC…QSISNEQKAC (64 aa)). Ser280 bears the Phosphoserine mark. Residues 323 to 348 (KVLGIVFFLFVVMWCPFFITNIMAVI) traverse the membrane as a helical segment. Asn343 is a serotonin binding site. Cys349 and Cys353 are disulfide-bonded. Topologically, residues 349 to 356 (CKESCNED) are extracellular. The helical transmembrane segment at 357–382 (VIGALLNVFVWIGYLSSAVNPLVYTL) threads the bilayer. The short motif at 376–380 (NPLVY) is the NPxxY motif; important for ligand-induced conformation changes and signaling element. Residues 383–471 (FNKTYRSAFS…DGVNEKVSCV (89 aa)) lie on the Cytoplasmic side of the membrane. A compositionally biased stretch (basic and acidic residues) spans 451-465 (QHSEEASKDNSDGVN). The interval 451-471 (QHSEEASKDNSDGVNEKVSCV) is disordered. Residues 469-471 (SCV) carry the PDZ-binding motif.

The protein belongs to the G-protein coupled receptor 1 family. In terms of assembly, interacts (via C-terminus) with MPDZ and PATJ. May interact (via C-terminus) with MPP3, PRDX6, DLG4, DLG1, CASK, APBA1 and MAGI2. Interacts with GRM2 and DRD2; this may affect signaling. In terms of tissue distribution, detected in brain cortex (at protein level). Detected in blood platelets.

It localises to the cell membrane. The protein localises to the cell projection. Its subcellular location is the dendrite. It is found in the axon. The protein resides in the cytoplasmic vesicle. It localises to the membrane. The protein localises to the caveola. Its subcellular location is the presynapse. G-protein coupled receptor activity is regulated by lipids: oleamide increases HTR2A-mediated activity. Inhibited by IHCH-7179 small molecule: IHCH-7179 acts both as an agonist activator for HTR1A and as an antagonist inhibitor for HTR2A. Functionally, G-protein coupled receptor for 5-hydroxytryptamine (serotonin). Also functions as a receptor for various drugs and psychoactive substances, including mescaline, psilocybin, 1-(2,5-dimethoxy-4-iodophenyl)-2-aminopropane (DOI) and lysergic acid diethylamide (LSD). Ligand binding causes a conformation change that triggers signaling via guanine nucleotide-binding proteins (G proteins) and modulates the activity of downstream effectors. HTR2A is coupled to G(q)/G(11) G alpha proteins and activates phospholipase C-beta, releasing diacylglycerol (DAG) and inositol 1,4,5-trisphosphate (IP3) second messengers that modulate the activity of phosphatidylinositol 3-kinase and promote the release of Ca(2+) ions from intracellular stores, respectively. Beta-arrestin family members inhibit signaling via G proteins and mediate activation of alternative signaling pathways. Affects neural activity, perception, cognition and mood. Plays a role in the regulation of behavior, including responses to anxiogenic situations and psychoactive substances. Plays a role in intestinal smooth muscle contraction, and may play a role in arterial vasoconstriction. (Microbial infection) Acts as a receptor for human JC polyomavirus/JCPyV. This chain is 5-hydroxytryptamine receptor 2A, found in Homo sapiens (Human).